Reading from the N-terminus, the 948-residue chain is Glycine dehydrogenase (decarboxylating) (948 aa).

K696 bears the N6-(pyridoxal phosphate)lysine mark.

This sequence belongs to the GcvP family. In terms of assembly, the glycine cleavage system is composed of four proteins: P, T, L and H. Pyridoxal 5'-phosphate serves as cofactor.

It catalyses the reaction N(6)-[(R)-lipoyl]-L-lysyl-[glycine-cleavage complex H protein] + glycine + H(+) = N(6)-[(R)-S(8)-aminomethyldihydrolipoyl]-L-lysyl-[glycine-cleavage complex H protein] + CO2. Its function is as follows. The glycine cleavage system catalyzes the degradation of glycine. The P protein binds the alpha-amino group of glycine through its pyridoxal phosphate cofactor; CO(2) is released and the remaining methylamine moiety is then transferred to the lipoamide cofactor of the H protein. This is Glycine dehydrogenase (decarboxylating) from Akkermansia muciniphila (strain ATCC BAA-835 / DSM 22959 / JCM 33894 / BCRC 81048 / CCUG 64013 / CIP 107961 / Muc).